The primary structure comprises 508 residues: Pancreatic alpha-amylase 2a5 (508 aa).

The signal sequence occupies residues 1-15; sequence MKFVLLLSLIGFCWA. At Gln-16 the chain carries Pyrrolidone carboxylic acid. 3 disulfides stabilise this stretch: Cys-43-Cys-101, Cys-85-Cys-130, and Cys-156-Cys-172. 3 residues coordinate Ca(2+): Asn-115, Arg-170, and Asp-179. Residue Arg-207 participates in chloride binding. Asp-209 (nucleophile) is an active-site residue. His-213 is a Ca(2+) binding site. Catalysis depends on Glu-245, which acts as the Proton donor. Chloride-binding residues include Asn-310 and Arg-349. 2 cysteine pairs are disulfide-bonded: Cys-390-Cys-396 and Cys-462-Cys-474.

Belongs to the glycosyl hydrolase 13 family. Monomer. Requires Ca(2+) as cofactor. Chloride is required as a cofactor.

The protein resides in the secreted. The protein localises to the extracellular space. The enzyme catalyses Endohydrolysis of (1-&gt;4)-alpha-D-glucosidic linkages in polysaccharides containing three or more (1-&gt;4)-alpha-linked D-glucose units.. This chain is Pancreatic alpha-amylase 2a5, found in Mus musculus (Mouse).